The following is a 250-amino-acid chain: MSAAHKNLLAVWAKEPKDLVAVEKALNELTKVLSASSDLNDKQSALASKDLYEISVLLAILKHDFETFDDYINQMHTYYTMAPENSENKHLMTGLHLMFLLAANRLSDFHMLLEQIPQKEQTSNAYISTPVRIEQSLMEGAYNKVVLTEKNIPSPFYTIFIRIMLDTIRREIATSIEKSFKVLTAKDATVMLLFDNDEQMKKFGQERKWHLDGERYVFEIEVAQEKPVNLDTVRVATQTLFYAKQLEQIV.

A PCI domain is found at 63–233 (HDFETFDDYI…QEKPVNLDTV (171 aa)).

It belongs to the proteasome subunit S14 family.

In terms of biological role, acts as a regulatory subunit of the 26S proteasome which is involved in the ATP-dependent degradation of ubiquitinated proteins. The chain is 26S proteasome non-ATPase regulatory subunit 8 from Caenorhabditis elegans.